A 142-amino-acid polypeptide reads, in one-letter code: Relaxin-3 (142 aa).

An N-terminal signal peptide occupies residues Met-1–Ala-25. Cystine bridges form between Cys-35-Cys-129, Cys-47-Cys-142, and Cys-128-Cys-133. Residues Ser-55–Arg-118 constitute a propeptide, connecting peptide.

It belongs to the insulin family. Heterodimer of a B chain and an A chain linked by two disulfide bonds.

Its subcellular location is the secreted. In terms of biological role, may play a role in neuropeptide signaling processes. Ligand for LGR7, RXFP3 and RXFP4. The sequence is that of Relaxin-3 (RLN3) from Pan troglodytes (Chimpanzee).